The chain runs to 586 residues: Axin-like protein pry-1 (586 aa).

Positions 1 to 135 (METHLGWARS…FIEAFNKMSS (135 aa)) are required for interaction with apr-1. The RGS domain occupies 10–131 (SLEAVLSDRS…GSEEFIEAFN (122 aa)). 3 disordered regions span residues 137 to 168 (TADQ…KSAA), 344 to 442 (MTDD…DSFA), and 478 to 501 (TSSL…HSKI). Composition is skewed to polar residues over residues 151 to 168 (HQNT…KSAA) and 368 to 388 (GEGS…QLHN). Residues 421 to 442 (SQSMCAPSYSSASSSYSRDSFA) are compositionally biased toward low complexity. Residues 486–501 (RRQHRKAPTPKKHSKI) are compositionally biased toward basic residues. The DIX domain maps to 505-586 (LSNLITISYL…FEGRIAAELR (82 aa)).

As to quaternary structure, interacts (via N-terminus) with apr-1 (via C-terminus). Interacts with bar-1 (via ARM repeats), gsk-3, and mig-5. Expressed in hypodermal cells (seam cells) V5 and V6, Q neuroblasts, ventral hypodermal cells P7/8 to P11/12, body wall muscle cells and neurons in the head, the tail and the ventral nerve cord.

The protein resides in the cell membrane. It localises to the nucleus. It is found in the cytoplasm. Its subcellular location is the cell cortex. In terms of biological role, works in parallel with axl-1 in negatively regulating bar-1 signaling in vulval precursor cells and Q neuroblasts. Inhibits Wnt signaling, which affects tissue specific expression of Hox genes, egl-5, lin-39 and mab-5. This in turn affects QR (postembryonic neuroblast) cell migration, vulval cell fate specification, and the development of sensory structures by the seam cell lineage. Has a role in alae V cell patterning, ray formation in the male tail and axon guidance. Does not affect B cell polarity. This chain is Axin-like protein pry-1, found in Caenorhabditis elegans.